A 339-amino-acid chain; its full sequence is Ketol-acid reductoisomerase (NADP(+)) (339 aa).

The KARI N-terminal Rossmann domain occupies 1–182 (MPNRYYEKDG…GCLKAGVIDT (182 aa)). NADP(+)-binding positions include 25-28 (YGSQ), Ser-51, Ser-53, and 83-86 (DHIQ). The active site involves His-108. An NADP(+)-binding site is contributed by Gly-134. Positions 183–328 (NFREETESDL…RELREMMTFL (146 aa)) constitute a KARI C-terminal knotted domain. Mg(2+)-binding residues include Asp-191, Glu-195, Glu-227, and Glu-231. Residue Ser-252 coordinates substrate.

The protein belongs to the ketol-acid reductoisomerase family. Mg(2+) serves as cofactor.

The enzyme catalyses (2R)-2,3-dihydroxy-3-methylbutanoate + NADP(+) = (2S)-2-acetolactate + NADPH + H(+). It catalyses the reaction (2R,3R)-2,3-dihydroxy-3-methylpentanoate + NADP(+) = (S)-2-ethyl-2-hydroxy-3-oxobutanoate + NADPH + H(+). Its pathway is amino-acid biosynthesis; L-isoleucine biosynthesis; L-isoleucine from 2-oxobutanoate: step 2/4. It functions in the pathway amino-acid biosynthesis; L-valine biosynthesis; L-valine from pyruvate: step 2/4. Involved in the biosynthesis of branched-chain amino acids (BCAA). Catalyzes an alkyl-migration followed by a ketol-acid reduction of (S)-2-acetolactate (S2AL) to yield (R)-2,3-dihydroxy-isovalerate. In the isomerase reaction, S2AL is rearranged via a Mg-dependent methyl migration to produce 3-hydroxy-3-methyl-2-ketobutyrate (HMKB). In the reductase reaction, this 2-ketoacid undergoes a metal-dependent reduction by NADPH to yield (R)-2,3-dihydroxy-isovalerate. This Solibacter usitatus (strain Ellin6076) protein is Ketol-acid reductoisomerase (NADP(+)).